The primary structure comprises 117 residues: MNTKTLIVVFLVCLLVSEVVLARRCGGRGRRIKIKKIVRKLRPIVRVMKVITRMRTSRPRPRLRPCNSSDLQTTSYQVMQPISPKLKSCPVSLAICNRKCSRRGMKGRCQRRECVCY.

Residues 1–22 form the signal peptide; the sequence is MNTKTLIVVFLVCLLVSEVVLA.

Contains 4 disulfide bonds. As to expression, expressed by the venom gland.

Its subcellular location is the secreted. The chain is Venom protein TxLP11 from Lychas mucronatus (Chinese swimming scorpion).